A 136-amino-acid polypeptide reads, in one-letter code: NADPH-dependent 7-cyano-7-deazaguanine reductase (136 aa).

The active-site Thioimide intermediate is Cys-50. Asp-57 (proton donor) is an active-site residue. Residues 72 to 74 (YEL) and 91 to 92 (HE) each bind substrate.

The protein belongs to the GTP cyclohydrolase I family. QueF type 1 subfamily.

The protein resides in the cytoplasm. The enzyme catalyses 7-aminomethyl-7-carbaguanine + 2 NADP(+) = 7-cyano-7-deazaguanine + 2 NADPH + 3 H(+). Its pathway is tRNA modification; tRNA-queuosine biosynthesis. Functionally, catalyzes the NADPH-dependent reduction of 7-cyano-7-deazaguanine (preQ0) to 7-aminomethyl-7-deazaguanine (preQ1). This is NADPH-dependent 7-cyano-7-deazaguanine reductase from Prochlorococcus marinus (strain MIT 9215).